We begin with the raw amino-acid sequence, 238 residues long: Type III secretion protein hrcQa (238 aa).

Residues 66-238 are hrcQa-C; that stretch reads DAEALLSLLG…SHEEHRHHEY (173 aa).

As to quaternary structure, interacts with hrcQb.

The protein resides in the cell inner membrane. Its function is as follows. Component of the type III secretion system, which is required for effector protein delivery, parasitism, and pathogenicity. Probably participates in the formation of a C-ring-like assembly along with hrcQb. The protein is Type III secretion protein hrcQa (hrcQa) of Pseudomonas savastanoi pv. phaseolicola (Pseudomonas syringae pv. phaseolicola).